Reading from the N-terminus, the 300-residue chain is ATP-dependent (S)-NAD(P)H-hydrate dehydratase (300 aa).

The 292-residue stretch at 6 to 297 (YAGKIKEFIP…GCIHQSFTSL (292 aa)) folds into the YjeF C-terminal domain. Residues Gly106 and 158-164 (NEVEFKR) contribute to the (6S)-NADPHX site. Residues 188–192 (KGSTD) and 218–227 (GSNRRCGGQG) contribute to the ATP site. (6S)-NADPHX is bound at residue Asp228.

This sequence belongs to the NnrD/CARKD family. It depends on Mg(2+) as a cofactor.

The enzyme catalyses (6S)-NADHX + ATP = ADP + phosphate + NADH + H(+). The catalysed reaction is (6S)-NADPHX + ATP = ADP + phosphate + NADPH + H(+). Functionally, catalyzes the dehydration of the S-form of NAD(P)HX at the expense of ATP, which is converted to ADP. Together with NAD(P)HX epimerase, which catalyzes the epimerization of the S- and R-forms, the enzyme allows the repair of both epimers of NAD(P)HX, a damaged form of NAD(P)H that is a result of enzymatic or heat-dependent hydration. This Pediculus humanus subsp. corporis (Body louse) protein is ATP-dependent (S)-NAD(P)H-hydrate dehydratase.